A 404-amino-acid polypeptide reads, in one-letter code: Caspase-1 (404 aa).

Positions 1-91 constitute a CARD domain; sequence MADKVLKDKR…HLAQTLGLSS (91 aa). The propeptide occupies 1-119; it reads MADKVLKDKR…SLPAFVENMP (119 aa). Active-site residues include H237 and C285. Positions 298–316 are excised as a propeptide; that stretch reads SPKASTDSWTHQPLMLQSD. S302 is modified (phosphoserine).

This sequence belongs to the peptidase C14A family. Heterotetramer that consists of two anti-parallel arranged heterodimers, each one formed by a 20 kDa (Caspase-1 subunit p20) and a 10 kDa (Caspase-1 subunit p10) subunit. May be a component of the inflammasome, a protein complex which also includes PYCARD, CARD8 and NLRP2 and whose function would be the activation of pro-inflammatory caspases. Component of the AIM2 PANoptosome complex, a multiprotein complex that drives inflammatory cell death (PANoptosis). Both the p10 and p20 subunits interact with MEFV. Interacts with CARD17P/INCA and CARD18. Interacts with SERPINB1; this interaction regulates CASP1 activity. In terms of assembly, heterotetramer that consists of two anti-parallel arranged heterodimers, each one formed by a 20 kDa (Caspase-1 subunit p20) and a 10 kDa (Caspase-1 subunit p10) subunit. In terms of processing, the two subunits are derived from the precursor sequence by an autocatalytic mechanism. Post-translationally, ubiquitinated via 'Lys-11'-linked polyubiquitination. Deubiquitinated by USP8.

The protein resides in the cytoplasm. Its subcellular location is the cell membrane. The enzyme catalyses Strict requirement for an Asp residue at position P1 and has a preferred cleavage sequence of Tyr-Val-Ala-Asp-|-.. Its function is as follows. Thiol protease involved in a variety of inflammatory processes by proteolytically cleaving other proteins, such as the precursors of the inflammatory cytokines interleukin-1 beta (IL1B) and interleukin 18 (IL18) as well as the pyroptosis inducer Gasdermin-D (GSDMD), into active mature peptides. Plays a key role in cell immunity as an inflammatory response initiator: once activated through formation of an inflammasome complex, it initiates a pro-inflammatory response through the cleavage of the two inflammatory cytokines IL1B and IL18, releasing the mature cytokines which are involved in a variety of inflammatory processes. Cleaves a tetrapeptide after an Asp residue at position P1. Also initiates pyroptosis, a programmed lytic cell death pathway, through cleavage of GSDMD. In contrast to cleavage of interleukin IL1B, recognition and cleavage of GSDMD is not strictly dependent on the consensus cleavage site but depends on an exosite interface on CASP1 that recognizes and binds the Gasdermin-D, C-terminal (GSDMD-CT) part. Cleaves and activates CASP7 in response to bacterial infection, promoting plasma membrane repair. Upon inflammasome activation, during DNA virus infection but not RNA virus challenge, controls antiviral immunity through the cleavage of CGAS, rendering it inactive. In apoptotic cells, cleaves SPHK2 which is released from cells and remains enzymatically active extracellularly. In Canis lupus familiaris (Dog), this protein is Caspase-1 (CASP1).